The sequence spans 191 residues: Orotate phosphoribosyltransferase (191 aa).

114–122 is a 5-phospho-alpha-D-ribose 1-diphosphate binding site; sequence EDVVTTGKS. Orotate is bound by residues Thr118 and Arg146.

Belongs to the purine/pyrimidine phosphoribosyltransferase family. PyrE subfamily. As to quaternary structure, homodimer. Mg(2+) is required as a cofactor.

It carries out the reaction orotidine 5'-phosphate + diphosphate = orotate + 5-phospho-alpha-D-ribose 1-diphosphate. It participates in pyrimidine metabolism; UMP biosynthesis via de novo pathway; UMP from orotate: step 1/2. Its function is as follows. Catalyzes the transfer of a ribosyl phosphate group from 5-phosphoribose 1-diphosphate to orotate, leading to the formation of orotidine monophosphate (OMP). The sequence is that of Orotate phosphoribosyltransferase from Clostridium botulinum (strain ATCC 19397 / Type A).